We begin with the raw amino-acid sequence, 87 residues long: Putative septation protein SpoVG (87 aa).

Belongs to the SpoVG family.

Functionally, could be involved in septation. In Agathobacter rectalis (strain ATCC 33656 / DSM 3377 / JCM 17463 / KCTC 5835 / VPI 0990) (Eubacterium rectale), this protein is Putative septation protein SpoVG.